The following is a 507-amino-acid chain: ATP synthase subunit alpha, chloroplastic (507 aa).

Residue 170 to 177 (GDRQTGKT) coordinates ATP.

Belongs to the ATPase alpha/beta chains family. As to quaternary structure, F-type ATPases have 2 components, CF(1) - the catalytic core - and CF(0) - the membrane proton channel. CF(1) has five subunits: alpha(3), beta(3), gamma(1), delta(1), epsilon(1). CF(0) has four main subunits: a, b, b' and c.

The protein localises to the plastid. It is found in the chloroplast thylakoid membrane. It carries out the reaction ATP + H2O + 4 H(+)(in) = ADP + phosphate + 5 H(+)(out). In terms of biological role, produces ATP from ADP in the presence of a proton gradient across the membrane. The alpha chain is a regulatory subunit. The chain is ATP synthase subunit alpha, chloroplastic from Nicotiana sylvestris (Wood tobacco).